The chain runs to 273 residues: Shikimate dehydrogenase (NADP(+)) (273 aa).

Residues 19–21 (SKS) and Thr-66 contribute to the shikimate site. Catalysis depends on Lys-70, which acts as the Proton acceptor. Shikimate contacts are provided by Asn-91 and Asp-107. Residues 131-135 (GAGGA) and Met-218 each bind NADP(+). Tyr-220 contacts shikimate. Gly-242 is a binding site for NADP(+).

Belongs to the shikimate dehydrogenase family. Homodimer.

The catalysed reaction is shikimate + NADP(+) = 3-dehydroshikimate + NADPH + H(+). It functions in the pathway metabolic intermediate biosynthesis; chorismate biosynthesis; chorismate from D-erythrose 4-phosphate and phosphoenolpyruvate: step 4/7. Functionally, involved in the biosynthesis of the chorismate, which leads to the biosynthesis of aromatic amino acids. Catalyzes the reversible NADPH linked reduction of 3-dehydroshikimate (DHSA) to yield shikimate (SA). This chain is Shikimate dehydrogenase (NADP(+)), found in Buchnera aphidicola subsp. Acyrthosiphon pisum (strain 5A).